We begin with the raw amino-acid sequence, 555 residues long: Glucose-6-phosphate isomerase (555 aa).

Residues glycine 169–serine 170, serine 219–threonine 224, glutamine 364, glutamate 368, histidine 399, and lysine 521 contribute to the D-glucose 6-phosphate site. Glutamate 368 acts as the Proton donor in catalysis. Residues histidine 399 and lysine 521 contribute to the active site.

This sequence belongs to the GPI family. In terms of assembly, homodimer.

It localises to the cytoplasm. The protein resides in the cytosol. The catalysed reaction is alpha-D-glucose 6-phosphate = beta-D-fructose 6-phosphate. The protein operates within carbohydrate degradation; glycolysis; D-glyceraldehyde 3-phosphate and glycerone phosphate from D-glucose: step 2/4. Its function is as follows. In the cytoplasm, catalyzes the conversion of glucose-6-phosphate to fructose-6-phosphate, the second step in glycolysis, and the reverse reaction during gluconeogenesis. The protein is Glucose-6-phosphate isomerase (PGI1) of Candida glabrata (strain ATCC 2001 / BCRC 20586 / JCM 3761 / NBRC 0622 / NRRL Y-65 / CBS 138) (Yeast).